Reading from the N-terminus, the 1011-residue chain is MFTWAMKKIFGTSHERAIRRMRPRVEAIGRMEPELQKLSDAQLRAKTAEFKEKLANGATLDDILVPAFAVCREASKRALKMRHYDVQLIGGMVLHNGCIAEMRTGEGKTLVATLPCYLNALEGKGVHVVTVNDYLARRDAEWMGKLYGFLGLSTGVVVNQQGDAEKRHAYRCDITYGQNNEFGFDYLRDNMKFSALEYAQRPLHYAIVDEVDSILIDEARTPLIISGQGERSSDKYRTINEVIPQLRNEEHYALDEKAHSVTLTDEGVETAERLLASLQVLKGTNLYDPVNLETLHILNQCLRAHTLYKRDVNYMVRDGKVLIIDEFTGRVLAGRRWSDGLHQAVEAKENVRIQEESRTMATITFQNLFRLYKKLSGMTGTADTEAAEFHSTYKLDCVIIPTNKPVVRKDYEDLVYKTEKEKFTAVINEILEKHELGQPILVGTTSVEKSTAISRILAKRGVKHNVLNAKHHENEAYVVAQAGRKGAITVSTNMAGRGTDIILGGNAEMLAKLKFKEQNRQPEAEPEAFEALVEEIKKECTAEGDEIREIGGLYILGTERHESRRIDNQLRGRAGRQGDPGTSKFYLSLEDDLMRIFAGDRVKNLMERMGMPDDEPIEHPWVTKSVENAQKKVEERNFDIRKNLLEYDDVMSAQRKTIYDMRQSLLVGRYSPEILDEEGKPTGEKRTIKPLASIVELVRPDVGYLLGMFANDPVMPLDADGNRREIVRKDFEKTERFVELENMQREIYTRWGVKIELETRADKVLEIYDECSELMPLALTEQRERLLDLMDRIIGAMVEESCPARKPPEDWDWGGIFQGFREHFSVELPDDIAHIGDQETLARELYERAEKAYEKREEEIGVELSLRIFRHLYLEELDKAWVDHLTDMDHLRDGIGLRGYGQKDPKQEYKKEGYNMFVNMVARVSSNVVTKLFSVNVRRAEQEEAQIEAADRERHAAALLDAVAQHDESLPLGANPAPARPQPAVMQEQECPCGSGKPFNKCHGGEDEATA.

Residues Q87, 105–109, and D500 contribute to the ATP site; that span reads GEGKT. The disordered stretch occupies residues 969–1011; sequence SLPLGANPAPARPQPAVMQEQECPCGSGKPFNKCHGGEDEATA. The Zn(2+) site is built by C991, C993, C1002, and H1003.

It belongs to the SecA family. In terms of assembly, monomer and homodimer. Part of the essential Sec protein translocation apparatus which comprises SecA, SecYEG and auxiliary proteins SecDF-YajC and YidC. Zn(2+) serves as cofactor.

The protein resides in the cell inner membrane. The protein localises to the cytoplasm. It carries out the reaction ATP + H2O + cellular proteinSide 1 = ADP + phosphate + cellular proteinSide 2.. Part of the Sec protein translocase complex. Interacts with the SecYEG preprotein conducting channel. Has a central role in coupling the hydrolysis of ATP to the transfer of proteins into and across the cell membrane, serving as an ATP-driven molecular motor driving the stepwise translocation of polypeptide chains across the membrane. The polypeptide is Protein translocase subunit SecA (Sorangium cellulosum (strain So ce56) (Polyangium cellulosum (strain So ce56))).